Here is a 180-residue protein sequence, read N- to C-terminus: Transcription factor HES-7.1-B (180 aa).

The bHLH domain occupies His13–Arg70. Residues Tyr84 to Gln116 form the Orange domain. Residues Trp176–Trp179 carry the WRPW motif motif.

In terms of assembly, transcription repression requires formation of a complex with a corepressor protein of the Groucho/TLE family. As to expression, expressed in the presumptive midbrain-hindbrain boundary (MHB) as early as the early gastrula stage (stage 10.5). Expression in the MHB continues through to tailbud stage. Also transiently expressed in the eye anlage at late neurula stage.

It localises to the nucleus. In terms of biological role, transcriptional repressor. Represses transcription from both N box- and E box-containing promoters. Demarcates the prospective midbrain-hindbrain boundary (MHB) region in the neuroectoderm in early gastrulae embryos by repressing transcription of a number of target genes. This Xenopus laevis (African clawed frog) protein is Transcription factor HES-7.1-B (hes7.1-b).